Consider the following 354-residue polypeptide: MLVLGIESSCDETGVALYDTERGLRAHCLHTQMAMHAEYGGVVPELASRDHIRRLVPLTEGCLAQAGASYGDIDAVAFTQGPGLGGALLAGSSYANALALALDKPVIPVHHLEGHLLSPLLAEEKPDFPFVALLVSGGHTQIMAVRGIGDYALLGESVDDAAGEAFDKTAKLLGLLYPGGAKLSELAESGRFEAFVFPRPMIHSDDLQMSFSGLKTAVLTAVEKVRAENGADDIPEQTRNDICRAFQDAVVDVLAAKVKKALLQTGFRTVVVAGGVGANRKLRETFGNMTVQIPTPKGKPKHPSEKVSVFFPPTAYCTDNGAMIAFAGAMHLGKGREVGAFNVRPRWPLSEIVR.

Residues His111 and His115 each coordinate Fe cation. Substrate is bound by residues 134 to 138 (LVSGG), Asp167, Gly180, and Asn279. Asp319 is a binding site for Fe cation.

Belongs to the KAE1 / TsaD family. Fe(2+) serves as cofactor.

Its subcellular location is the cytoplasm. The catalysed reaction is L-threonylcarbamoyladenylate + adenosine(37) in tRNA = N(6)-L-threonylcarbamoyladenosine(37) in tRNA + AMP + H(+). Functionally, required for the formation of a threonylcarbamoyl group on adenosine at position 37 (t(6)A37) in tRNAs that read codons beginning with adenine. Is involved in the transfer of the threonylcarbamoyl moiety of threonylcarbamoyl-AMP (TC-AMP) to the N6 group of A37, together with TsaE and TsaB. TsaD likely plays a direct catalytic role in this reaction. This is tRNA N6-adenosine threonylcarbamoyltransferase from Neisseria meningitidis serogroup B (strain ATCC BAA-335 / MC58).